Consider the following 258-residue polypeptide: Phosphate import ATP-binding protein PstB 1 (258 aa).

In terms of domain architecture, ABC transporter spans 5 to 247; sequence LDLTDVNIYY…EKIFSNPNQK (243 aa). 37–44 provides a ligand contact to ATP; it reads GPSGCGKT.

It belongs to the ABC transporter superfamily. Phosphate importer (TC 3.A.1.7) family. As to quaternary structure, the complex is composed of two ATP-binding proteins (PstB), two transmembrane proteins (PstC and PstA) and a solute-binding protein (PstS).

It is found in the cell membrane. The enzyme catalyses phosphate(out) + ATP + H2O = ADP + 2 phosphate(in) + H(+). Part of the ABC transporter complex PstSACB involved in phosphate import. Responsible for energy coupling to the transport system. The protein is Phosphate import ATP-binding protein PstB 1 of Mycobacterium tuberculosis (strain CDC 1551 / Oshkosh).